Here is a 382-residue protein sequence, read N- to C-terminus: Alkanesulfonate monooxygenase (382 aa).

Belongs to the SsuD family.

It catalyses the reaction an alkanesulfonate + FMNH2 + O2 = an aldehyde + FMN + sulfite + H2O + 2 H(+). In terms of biological role, catalyzes the desulfonation of aliphatic sulfonates. This chain is Alkanesulfonate monooxygenase, found in Pseudomonas putida (strain ATCC 700007 / DSM 6899 / JCM 31910 / BCRC 17059 / LMG 24140 / F1).